A 315-amino-acid polypeptide reads, in one-letter code: Calumenin (315 aa).

The first 19 residues, 1–19, serve as a signal peptide directing secretion; that stretch reads MDLRQFLMCLSLCTAFALS. Residue Y47 is modified to Phosphotyrosine. The residue at position 65 (T65) is a Phosphothreonine. EF-hand domains are found at residues 68–103, 104–139, 151–186, 188–223, 229–264, and 265–300; these read ESKE…AQKK, YIYD…TYLD, PIMV…EEYD, MKDI…HDGN, WVKT…SDYD, and HAEA…FVGS. A Phosphoserine modification is found at S69. D81, D83, D85, E92, D117, N119, D121, and E128 together coordinate Ca(2+). N-linked (GlcNAc...) asparagine glycosylation is present at N131. Ca(2+) contacts are provided by D164, D166, D168, E175, D201, N203, D205, E212, D242, N244, D246, K248, and E253. Position 254 is a phosphothreonine (T254). Phosphoserine occurs at positions 261 and 277. The Ca(2+) site is built by D278, D280, D282, K284, and E289. The Prevents secretion from ER signature appears at 312–315; that stretch reads HDEF.

Belongs to the CREC family. In terms of assembly, binds crotoxin. Interacts with GGCX.

The protein localises to the endoplasmic reticulum membrane. It is found in the golgi apparatus. Its subcellular location is the secreted. The protein resides in the melanosome. It localises to the sarcoplasmic reticulum lumen. In terms of biological role, involved in regulation of vitamin K-dependent carboxylation of multiple N-terminal glutamate residues. Seems to inhibit gamma-carboxylase GGCX. Binds 7 calcium ions with a low affinity. This is Calumenin (Calu) from Rattus norvegicus (Rat).